Reading from the N-terminus, the 258-residue chain is UPF0246 protein ACIAD2218 (258 aa).

Belongs to the UPF0246 family.

This chain is UPF0246 protein ACIAD2218, found in Acinetobacter baylyi (strain ATCC 33305 / BD413 / ADP1).